Reading from the N-terminus, the 348-residue chain is Fe(3+) ions import ATP-binding protein FbpC (348 aa).

An ABC transporter domain is found at 7-237 (VELRNVTKRF…PASRFMASFM (231 aa)). ATP is bound at residue 39 to 46 (GPSGCGKT).

It belongs to the ABC transporter superfamily. Fe(3+) ion importer (TC 3.A.1.10) family. As to quaternary structure, the complex is composed of two ATP-binding proteins (FbpC), two transmembrane proteins (FbpB) and a solute-binding protein (FbpA).

Its subcellular location is the cell inner membrane. The enzyme catalyses Fe(3+)(out) + ATP + H2O = Fe(3+)(in) + ADP + phosphate + H(+). Functionally, part of the ABC transporter complex FbpABC involved in Fe(3+) ions import. Responsible for energy coupling to the transport system. The protein is Fe(3+) ions import ATP-binding protein FbpC of Escherichia coli (strain K12).